The sequence spans 701 residues: MNPVIKKFQFGQSTVTLETGRIARQASGAVLVTVDDDVSVLVTVVGAKQADAGKGFFPLSVHYQEKTYAAGKIPGGFFKREGRPSEKETLTSRLIDRPIRPLFPEGFMNEVQVVCTVVSTSKKIDPDIAAMIGTSAALAISGIPFDGPVGAARVAFHESTGYLLNPTYEQLQASSLDMVVAGTSEAVLMVESEAKELTEDQMLGAVLFAHDEFQVVINAIKELAAEAAKPTWDWQPKPEATALLGAIRAEFGDAISQAYTITVKADRYARLGELKDQVVAKLAVEEGSPSAGEVKAAFGEIEYRTVRENIVNGKPRIDGRDTRTVRPLNIEVGVLPKTHGSALFTRGETQALVVATLGTARDAQLLDTLEGEKKDPFMLHYNFPPFSVGECGRMGGAGRREIGHGRLARRSVQAMLPGADVFPYTIRVVSEITESNGSSSMASVCGASLALMDAGVPMKAPVAGIAMGLVKEGEKFAILTDILGDEDHLGDMDFKVAGTSKGVTALQMDIKIKGITEEIMEIALGQALEARLNILGQMNQIIGQSRNELSANAPTMIAMKIDTDKIRDVIGKGGATIRAICEETKASIDIEDDGSIKIFGESKEAAEAARQRVLGITAEAEIGKIYLGKVERIVDFGAFVNILPGKDGLVHISMLSDARVEKVTDILKEGEEVEVLVLDVDNRGRIKLSIKDVAAAKASGV.

Mg(2+) contacts are provided by Asp487 and Asp493. A KH domain is found at 554–613; it reads PTMIAMKIDTDKIRDVIGKGGATIRAICEETKASIDIEDDGSIKIFGESKEAAEAARQRV. An S1 motif domain is found at 623-691; sequence GKIYLGKVER…NRGRIKLSIK (69 aa).

The protein belongs to the polyribonucleotide nucleotidyltransferase family. Component of the RNA degradosome, which is a multiprotein complex involved in RNA processing and mRNA degradation. It depends on Mg(2+) as a cofactor.

It localises to the cytoplasm. The catalysed reaction is RNA(n+1) + phosphate = RNA(n) + a ribonucleoside 5'-diphosphate. Involved in mRNA degradation. Catalyzes the phosphorolysis of single-stranded polyribonucleotides processively in the 3'- to 5'-direction. The sequence is that of Polyribonucleotide nucleotidyltransferase from Pseudomonas syringae pv. tomato (strain ATCC BAA-871 / DC3000).